We begin with the raw amino-acid sequence, 210 residues long: Somatotropin (210 aa).

A signal peptide spans 1–23 (MARVLVLLSVVLVSLLVNQGRAS). Zn(2+) is bound at residue H38. C71 and C183 are oxidised to a cystine. A Zn(2+)-binding site is contributed by E192. C200 and C208 are joined by a disulfide.

Belongs to the somatotropin/prolactin family.

The protein localises to the secreted. Its function is as follows. Growth hormone plays an important role in growth control. In Cyprinus carpio (Common carp), this protein is Somatotropin (gh).